The sequence spans 487 residues: MTSPHFAWLPPEINSALMFAGPGSGPLIAAATAWGELAEELLASIASLGSVTSELTSGAWLGPSAAAMMAVATQYLAWLSTAAAQAEQAAAQAMAIATAFEAALAATVQPAVVAANRGLMQLLAATNWFGQNAPALMDVEAAYEQMWALDVAAMAGYHFDASAAVAQLAPWQQVLRNLGIDIGKNGQINLGFGNTGSGNIGNNNIGNNNIGSGNTGTGNIGSGNTGSGNLGLGNLGDGNIGFGNTGSGNIGFGITGDHQMGFGGFNSGSGNIGFGNSGTGNVGLFNSGSGNIGIGNSGSLNSGIGTSGTINAGLGSAGSLNTSFWNAGMQNAALGSAAGSEAALVSSAGYATGGMSTAALSSGILASALGSTGGLQHGLANVLNSGLTNTPVAAPASAPVGGLDSGNPNPGSGSAAAGSGANPGLRSPGTSYPSFVNSGSNDSGLRNTAVREPSTPGSGIPKSNFYPSPDRESAYASPRIGQPVGSE.

Residues Ala-398–Gly-424 show a composition bias toward low complexity. The segment at Ala-398–Glu-487 is disordered. Positions Pro-428–Arg-446 are enriched in polar residues.

This sequence belongs to the mycobacterial PPE family.

It localises to the secreted. Functionally, plays a major role in the integrity and stability of the capsule. This Mycobacterium tuberculosis (strain CDC 1551 / Oshkosh) protein is PPE family protein PPE10 (PPE10).